Reading from the N-terminus, the 134-residue chain is Phosphoribosyl-AMP cyclohydrolase (134 aa).

Residue Asp-77 coordinates Mg(2+). Cys-78 is a Zn(2+) binding site. The Mg(2+) site is built by Asp-79 and Asp-81. 2 residues coordinate Zn(2+): Cys-95 and Cys-102.

It belongs to the PRA-CH family. As to quaternary structure, homodimer. Requires Mg(2+) as cofactor. Zn(2+) is required as a cofactor.

It localises to the cytoplasm. It carries out the reaction 1-(5-phospho-beta-D-ribosyl)-5'-AMP + H2O = 1-(5-phospho-beta-D-ribosyl)-5-[(5-phospho-beta-D-ribosylamino)methylideneamino]imidazole-4-carboxamide. The protein operates within amino-acid biosynthesis; L-histidine biosynthesis; L-histidine from 5-phospho-alpha-D-ribose 1-diphosphate: step 3/9. Functionally, catalyzes the hydrolysis of the adenine ring of phosphoribosyl-AMP. The chain is Phosphoribosyl-AMP cyclohydrolase from Pseudomonas aeruginosa (strain LESB58).